Reading from the N-terminus, the 436-residue chain is Bifunctional protein GlmU (436 aa).

The tract at residues 1–226 (MNEISIIILA…ETNFMGINDK (226 aa)) is pyrophosphorylase. UDP-N-acetyl-alpha-D-glucosamine is bound by residues 9–12 (LAAG), K23, Q75, and 82–83 (GT). D105 provides a ligand contact to Mg(2+). G138, E152, N167, and N224 together coordinate UDP-N-acetyl-alpha-D-glucosamine. N224 serves as a coordination point for Mg(2+). The segment at 227-247 (FALSIAEEIMQNRIKENLMKN) is linker. Residues 248–436 (GVIMSLPDTI…YKFFGKNDEK (189 aa)) form an N-acetyltransferase region. R311 and K328 together coordinate UDP-N-acetyl-alpha-D-glucosamine. H339 acts as the Proton acceptor in catalysis. Residues Y342 and N353 each contribute to the UDP-N-acetyl-alpha-D-glucosamine site. Residues 362–363 (NY), S381, A399, and R416 contribute to the acetyl-CoA site.

The protein in the N-terminal section; belongs to the N-acetylglucosamine-1-phosphate uridyltransferase family. In the C-terminal section; belongs to the transferase hexapeptide repeat family. As to quaternary structure, homotrimer. It depends on Mg(2+) as a cofactor.

The protein resides in the cytoplasm. It carries out the reaction alpha-D-glucosamine 1-phosphate + acetyl-CoA = N-acetyl-alpha-D-glucosamine 1-phosphate + CoA + H(+). The catalysed reaction is N-acetyl-alpha-D-glucosamine 1-phosphate + UTP + H(+) = UDP-N-acetyl-alpha-D-glucosamine + diphosphate. The protein operates within nucleotide-sugar biosynthesis; UDP-N-acetyl-alpha-D-glucosamine biosynthesis; N-acetyl-alpha-D-glucosamine 1-phosphate from alpha-D-glucosamine 6-phosphate (route II): step 2/2. It participates in nucleotide-sugar biosynthesis; UDP-N-acetyl-alpha-D-glucosamine biosynthesis; UDP-N-acetyl-alpha-D-glucosamine from N-acetyl-alpha-D-glucosamine 1-phosphate: step 1/1. It functions in the pathway bacterial outer membrane biogenesis; LPS lipid A biosynthesis. Catalyzes the last two sequential reactions in the de novo biosynthetic pathway for UDP-N-acetylglucosamine (UDP-GlcNAc). The C-terminal domain catalyzes the transfer of acetyl group from acetyl coenzyme A to glucosamine-1-phosphate (GlcN-1-P) to produce N-acetylglucosamine-1-phosphate (GlcNAc-1-P), which is converted into UDP-GlcNAc by the transfer of uridine 5-monophosphate (from uridine 5-triphosphate), a reaction catalyzed by the N-terminal domain. This Campylobacter fetus subsp. fetus (strain 82-40) protein is Bifunctional protein GlmU.